The primary structure comprises 603 residues: DNA mismatch repair protein MutL (603 aa).

This sequence belongs to the DNA mismatch repair MutL/HexB family.

In terms of biological role, this protein is involved in the repair of mismatches in DNA. It is required for dam-dependent methyl-directed DNA mismatch repair. May act as a 'molecular matchmaker', a protein that promotes the formation of a stable complex between two or more DNA-binding proteins in an ATP-dependent manner without itself being part of a final effector complex. This is DNA mismatch repair protein MutL from Rhodopseudomonas palustris (strain BisA53).